We begin with the raw amino-acid sequence, 238 residues long: Ribonuclease PH (238 aa).

Phosphate contacts are provided by residues R86 and G124–R126.

The protein belongs to the RNase PH family. Homohexameric ring arranged as a trimer of dimers.

The catalysed reaction is tRNA(n+1) + phosphate = tRNA(n) + a ribonucleoside 5'-diphosphate. Its function is as follows. Phosphorolytic 3'-5' exoribonuclease that plays an important role in tRNA 3'-end maturation. Removes nucleotide residues following the 3'-CCA terminus of tRNAs; can also add nucleotides to the ends of RNA molecules by using nucleoside diphosphates as substrates, but this may not be physiologically important. Probably plays a role in initiation of 16S rRNA degradation (leading to ribosome degradation) during starvation. This is Ribonuclease PH from Acinetobacter baumannii (strain AB307-0294).